Here is a 393-residue protein sequence, read N- to C-terminus: Short-chain dehydrogenase/reductase family 42E member 1 (393 aa).

The active-site Proton acceptor is Y152. Residue K156 participates in NAD(+) binding. 2 helical membrane-spanning segments follow: residues 282 to 302 (LPLTLVYCFAFLTEMVHFILG) and 371 to 391 (GLLVFLLIIAVLMWLPSSVIL).

This sequence belongs to the 3-beta-HSD family.

The protein resides in the membrane. In Homo sapiens (Human), this protein is Short-chain dehydrogenase/reductase family 42E member 1 (SDR42E1).